The chain runs to 49 residues: Large ribosomal subunit protein bL33A (49 aa).

It belongs to the bacterial ribosomal protein bL33 family.

The protein is Large ribosomal subunit protein bL33A of Bacillus licheniformis (strain ATCC 14580 / DSM 13 / JCM 2505 / CCUG 7422 / NBRC 12200 / NCIMB 9375 / NCTC 10341 / NRRL NRS-1264 / Gibson 46).